We begin with the raw amino-acid sequence, 507 residues long: Natural resistance-associated macrophage protein 1 (507 aa).

The tract at residues 1–36 (MIRDKNPQRVNRPSYGSISSLPSPAPQPEPSRNTYL) is disordered. The Cytoplasmic segment spans residues 1-39 (MIRDKNPQRVNRPSYGSISSLPSPAPQPEPSRNTYLSEK). Residues 8–22 (QRVNRPSYGSISSLP) show a composition bias toward polar residues. A helical transmembrane segment spans residues 40–60 (IPIPSTEQLLWVLLWATVLGL). At 61-123 (LCQRLAARLG…ISFNLLSAGR (63 aa)) the chain is on the extracellular side. The chain crosses the membrane as a helical span at residues 124–144 (IPLWGGVLITIVDTFFFLFLD). Residues 145–152 (NYGLRKLE) are Cytoplasmic-facing. The helical transmembrane segment at 153-173 (AFFGFLVTIMALTFGYEYVVA) threads the bilayer. The Extracellular segment spans residues 174–199 (RPSQGALLKGLFLPSCPGCGQPELLQ). The chain crosses the membrane as a helical span at residues 200–220 (AVGIVGAIIMPHNIYLHSALV). At 221–245 (KSREVDRTRRGDVREANMYFLTEAT) the chain is on the cytoplasmic side. Residues 246 to 266 (IALFVSFIINLFVMAVFGQAF) form a helical membrane-spanning segment. Topologically, residues 267–305 (YQQTNEEAFNICANSSLHNYAKIFPRDNNTVSVDIYQGG) are extracellular. Asn-280 and Asn-294 each carry an N-linked (GlcNAc...) asparagine glycan. A helical membrane pass occupies residues 306–326 (VILGCLFGPAALYIWAVGLLA). At 327–353 (AGQSSTMTGTYAGQFVMEGFLKLRWSR) the chain is on the cytoplasmic side. Residues 354-374 (FARVLLTRSCAILPTVLVAVF) traverse the membrane as a helical segment. Residues 375–391 (RDLRDLSGLNDLLNVLQ) lie on the Extracellular side of the membrane. Residues 392–412 (SLLLPFAVLPILTFTSMPAVM) form a helical membrane-spanning segment. At 413-422 (QEFANGWLSK) the chain is on the cytoplasmic side. The chain crosses the membrane as a helical span at residues 423–443 (VITSCIMALVCAINLYFVISY). Topologically, residues 444 to 451 (LPSLPHPA) are extracellular. The helical transmembrane segment at 452–472 (YFGLVALLAIGYLGLTAYLAW) threads the bilayer. Over 473–507 (TCCIAHGAKFLTHSSHQRFLYGLPIEEQEGREGSG) the chain is Cytoplasmic.

This sequence belongs to the NRAMP family.

The protein resides in the late endosome membrane. Its subcellular location is the lysosome membrane. It catalyses the reaction Zn(2+)(in) + H(+)(out) = Zn(2+)(out) + H(+)(in). It carries out the reaction Fe(2+)(in) + H(+)(out) = Fe(2+)(out) + H(+)(in). The catalysed reaction is Mn(2+)(in) + H(+)(out) = Mn(2+)(out) + H(+)(in). Its function is as follows. Macrophage-specific antiporter that fluxes metal ions in either direction against a proton gradient. Localized to late endosomal lysosomal membranes, delivers bivalent cations from the cytosol into these acidic compartments where they may directly affect antimicrobial activity. Involved in iron metabolism and host natural resistance to infection with intracellular parasites. Pathogen resistance involves sequestration of Fe(2+) and Mn(2+), cofactors of both prokaryotic and eukaryotic catalases and superoxide dismutases, not only to protect the macrophage against its own generation of reactive oxygen species, but to deny the cations to the pathogen for synthesis of its protective enzymes. This is Natural resistance-associated macrophage protein 1 (Slc11a1) from Rattus norvegicus (Rat).